Consider the following 343-residue polypeptide: Probable dual-specificity RNA methyltransferase RlmN (343 aa).

The Proton acceptor role is filled by Glu91. The Radical SAM core domain occupies 97-326 (HPDRITACIS…AEIRREKGAD (230 aa)). Cys104 and Cys331 are disulfide-bonded. Cys111, Cys115, and Cys118 together coordinate [4Fe-4S] cluster. S-adenosyl-L-methionine-binding positions include 158–159 (GE), Ser190, 213–215 (SLH), and Asn289. Cys331 (S-methylcysteine intermediate) is an active-site residue.

Belongs to the radical SAM superfamily. RlmN family. [4Fe-4S] cluster is required as a cofactor.

It is found in the cytoplasm. It catalyses the reaction adenosine(2503) in 23S rRNA + 2 reduced [2Fe-2S]-[ferredoxin] + 2 S-adenosyl-L-methionine = 2-methyladenosine(2503) in 23S rRNA + 5'-deoxyadenosine + L-methionine + 2 oxidized [2Fe-2S]-[ferredoxin] + S-adenosyl-L-homocysteine. The enzyme catalyses adenosine(37) in tRNA + 2 reduced [2Fe-2S]-[ferredoxin] + 2 S-adenosyl-L-methionine = 2-methyladenosine(37) in tRNA + 5'-deoxyadenosine + L-methionine + 2 oxidized [2Fe-2S]-[ferredoxin] + S-adenosyl-L-homocysteine. In terms of biological role, specifically methylates position 2 of adenine 2503 in 23S rRNA and position 2 of adenine 37 in tRNAs. In Thermotoga petrophila (strain ATCC BAA-488 / DSM 13995 / JCM 10881 / RKU-1), this protein is Probable dual-specificity RNA methyltransferase RlmN.